Reading from the N-terminus, the 256-residue chain is DNA polymerase sliding clamp 2 (256 aa).

This sequence belongs to the PCNA family. In terms of assembly, homotrimer. The subunits circularize to form a toroid; DNA passes through its center. Replication factor C (RFC) is required to load the toroid on the DNA.

Functionally, sliding clamp subunit that acts as a moving platform for DNA processing. Responsible for tethering the catalytic subunit of DNA polymerase and other proteins to DNA during high-speed replication. The protein is DNA polymerase sliding clamp 2 of Pyrobaculum aerophilum (strain ATCC 51768 / DSM 7523 / JCM 9630 / CIP 104966 / NBRC 100827 / IM2).